The sequence spans 205 residues: Ribosomal RNA small subunit methyltransferase G (205 aa).

S-adenosyl-L-methionine contacts are provided by residues Gly-76, Leu-81, Ile-127 to Glu-128, and Arg-140.

Belongs to the methyltransferase superfamily. RNA methyltransferase RsmG family.

It is found in the cytoplasm. The catalysed reaction is guanosine(527) in 16S rRNA + S-adenosyl-L-methionine = N(7)-methylguanosine(527) in 16S rRNA + S-adenosyl-L-homocysteine. Specifically methylates the N7 position of guanine in position 527 of 16S rRNA. In Francisella tularensis subsp. holarctica (strain FTNF002-00 / FTA), this protein is Ribosomal RNA small subunit methyltransferase G.